Consider the following 224-residue polypeptide: Probable molybdenum cofactor guanylyltransferase (224 aa).

GTP-binding positions include 20–22, Lys33, Asp88, and Asp117; that span reads LAG. Residue Asp117 participates in Mg(2+) binding.

Belongs to the MobA family. It depends on Mg(2+) as a cofactor.

It localises to the cytoplasm. The catalysed reaction is Mo-molybdopterin + GTP + H(+) = Mo-molybdopterin guanine dinucleotide + diphosphate. Its function is as follows. Transfers a GMP moiety from GTP to Mo-molybdopterin (Mo-MPT) cofactor (Moco or molybdenum cofactor) to form Mo-molybdopterin guanine dinucleotide (Mo-MGD) cofactor. In Methanosarcina mazei (strain ATCC BAA-159 / DSM 3647 / Goe1 / Go1 / JCM 11833 / OCM 88) (Methanosarcina frisia), this protein is Probable molybdenum cofactor guanylyltransferase.